A 609-amino-acid chain; its full sequence is UvrABC system protein C (609 aa).

Positions 16–94 (SSAGVYRMYD…IKQYMPKYNV (79 aa)) constitute a GIY-YIG domain. The 36-residue stretch at 203–238 (QQVISALVDKMELAAERQAYEQAARFRDQIMALRKV) folds into the UVR domain.

It belongs to the UvrC family. As to quaternary structure, interacts with UvrB in an incision complex.

It is found in the cytoplasm. In terms of biological role, the UvrABC repair system catalyzes the recognition and processing of DNA lesions. UvrC both incises the 5' and 3' sides of the lesion. The N-terminal half is responsible for the 3' incision and the C-terminal half is responsible for the 5' incision. The polypeptide is UvrABC system protein C (Shewanella baltica (strain OS195)).